The primary structure comprises 549 residues: CTP synthase (549 aa).

The tract at residues 1 to 267 (MAKFVFITGG…CREVLDVLNL (267 aa)) is amidoligase domain. S13 serves as a coordination point for CTP. Residue S13 participates in UTP binding. ATP is bound by residues 14 to 19 (SIGKGI) and D71. Mg(2+) contacts are provided by D71 and E141. CTP-binding positions include 148-150 (DIE), 188-193 (KTKPTQ), and K224. UTP is bound by residues 188–193 (KTKPTQ) and K224. The region spanning 292–534 (KIALVGKYVQ…IEAAQQRLPD (243 aa)) is the Glutamine amidotransferase type-1 domain. L-glutamine is bound at residue G354. Residue C381 is the Nucleophile; for glutamine hydrolysis of the active site. Residues 382–385 (LGMQ), E405, and R462 each bind L-glutamine. Active-site residues include H507 and E509.

The protein belongs to the CTP synthase family. In terms of assembly, homotetramer.

The enzyme catalyses UTP + L-glutamine + ATP + H2O = CTP + L-glutamate + ADP + phosphate + 2 H(+). It carries out the reaction L-glutamine + H2O = L-glutamate + NH4(+). It catalyses the reaction UTP + NH4(+) + ATP = CTP + ADP + phosphate + 2 H(+). It functions in the pathway pyrimidine metabolism; CTP biosynthesis via de novo pathway; CTP from UDP: step 2/2. With respect to regulation, allosterically activated by GTP, when glutamine is the substrate; GTP has no effect on the reaction when ammonia is the substrate. The allosteric effector GTP functions by stabilizing the protein conformation that binds the tetrahedral intermediate(s) formed during glutamine hydrolysis. Inhibited by the product CTP, via allosteric rather than competitive inhibition. Functionally, catalyzes the ATP-dependent amination of UTP to CTP with either L-glutamine or ammonia as the source of nitrogen. Regulates intracellular CTP levels through interactions with the four ribonucleotide triphosphates. The chain is CTP synthase from Synechococcus sp. (strain CC9605).